A 203-amino-acid polypeptide reads, in one-letter code: Outer-membrane lipoprotein LolB (203 aa).

The signal sequence occupies residues 1–18 (MTLRSFLILLLSSIVLAG). C19 carries the N-palmitoyl cysteine lipid modification. Residue C19 is the site of S-diacylglycerol cysteine attachment.

Belongs to the LolB family. In terms of assembly, monomer.

The protein resides in the cell outer membrane. In terms of biological role, plays a critical role in the incorporation of lipoproteins in the outer membrane after they are released by the LolA protein. The protein is Outer-membrane lipoprotein LolB of Vibrio campbellii (strain ATCC BAA-1116).